A 404-amino-acid chain; its full sequence is G-protein coupled receptor 182 (404 aa).

The Extracellular segment spans residues 1–57; the sequence is MSVKPSWGPGPSEGVTAVPTSDLGEIHNWTELLDLFNHTLSECHVELSQSTKRVVLF. N-linked (GlcNAc...) asparagine glycosylation is found at N28 and N37. The chain crosses the membrane as a helical span at residues 58–79; it reads ALYLAMFVVGLVENLLVICVNW. Over 80-90 the chain is Cytoplasmic; the sequence is RGSGRAGLMNL. The chain crosses the membrane as a helical span at residues 91-113; the sequence is YILNMAIADLGIVLSLPVWMLEV. Topologically, residues 114–127 are extracellular; sequence TLDYTWLWGSFSCR. A disulfide bridge links C126 with C202. The chain crosses the membrane as a helical span at residues 128 to 149; the sequence is FTHYFYFVNMYSSIFFLVCLSV. Topologically, residues 150–170 are cytoplasmic; the sequence is DRYVTLTSASPSWQRYQHRVR. The chain crosses the membrane as a helical span at residues 171 to 193; that stretch reads RAMCAGIWVLSAIIPLPEVVHIQ. Residues 194–217 are Extracellular-facing; sequence LVEGPEPMCLFMAPFETYSTWALA. Residues 218–239 traverse the membrane as a helical segment; sequence VALSTTILGFLLPFPLITVFNV. Over 240–258 the chain is Cytoplasmic; the sequence is LTACRLRQPGQPKSRRHCL. A helical transmembrane segment spans residues 259–280; that stretch reads LLCAYVAVFVMCWLPYHVTLLL. At 281–299 the chain is on the extracellular side; it reads LTLHGTHISLHCHLVHLLY. The helical transmembrane segment at 300-320 threads the bilayer; that stretch reads FFYDVIDCFSMLHCVINPILY. Topologically, residues 321–404 are cytoplasmic; the sequence is NFLSPHFRGR…ISPTQPLTPS (84 aa).

It belongs to the G-protein coupled receptor 1 family. Highly expressed in heart, skeletal muscle, immune system, adrenal gland and liver.

The protein resides in the cell membrane. Its function is as follows. Orphan receptor. In Homo sapiens (Human), this protein is G-protein coupled receptor 182 (GPR182).